A 146-amino-acid chain; its full sequence is Hemoglobin subunit beta (146 aa).

An N-acetylvaline modification is found at Val-1. The Globin domain maps to 2 to 146 (HLTGEEKAAV…VANALAHKYH (145 aa)). Thr-12 is subject to Phosphothreonine. Ser-44 carries the phosphoserine modification. Lys-59 carries the N6-acetyllysine modification. His-63 serves as a coordination point for heme b. The residue at position 82 (Lys-82) is an N6-acetyllysine. His-92 provides a ligand contact to heme b. Residue Cys-93 is modified to S-nitrosocysteine. Lys-144 carries the post-translational modification N6-acetyllysine.

It belongs to the globin family. As to quaternary structure, heterotetramer of two alpha chains and two beta chains. As to expression, red blood cells.

Its function is as follows. Involved in oxygen transport from the lung to the various peripheral tissues. This chain is Hemoglobin subunit beta (HBB), found in Lutra lutra (European river otter).